The chain runs to 320 residues: Methenyltetrahydromethanopterin cyclohydrolase (320 aa).

It belongs to the MCH family. As to quaternary structure, homodimer.

It is found in the cytoplasm. The enzyme catalyses 5,10-methenyl-5,6,7,8-tetrahydromethanopterin + H2O = N(5)-formyl-5,6,7,8-tetrahydromethanopterin + H(+). The protein operates within one-carbon metabolism; methanogenesis from CO(2); 5,10-methenyl-5,6,7,8-tetrahydromethanopterin from CO(2): step 3/3. In terms of biological role, catalyzes the reversible interconversion of 5-formyl-H(4)MPT to methenyl-H(4)MPT(+). The sequence is that of Methenyltetrahydromethanopterin cyclohydrolase (mch) from Methanothermobacter marburgensis (strain ATCC BAA-927 / DSM 2133 / JCM 14651 / NBRC 100331 / OCM 82 / Marburg) (Methanobacterium thermoautotrophicum).